We begin with the raw amino-acid sequence, 215 residues long: Probable phosphoglycerate mutase GpmB (215 aa).

Substrate is bound by residues 8 to 15 (RHGETQWN), 21 to 22 (QG), Arg-58, Lys-60, 82 to 85 (ELDM), 104 to 105 (RR), and 151 to 152 (GI). The active-site Tele-phosphohistidine intermediate is His-9. The Proton donor/acceptor role is filled by Glu-82.

The protein belongs to the phosphoglycerate mutase family. GpmB subfamily.

The enzyme catalyses (2R)-2-phosphoglycerate = (2R)-3-phosphoglycerate. The protein operates within carbohydrate degradation; glycolysis; pyruvate from D-glyceraldehyde 3-phosphate: step 3/5. The sequence is that of Probable phosphoglycerate mutase GpmB from Salmonella agona (strain SL483).